The chain runs to 106 residues: Cytochrome c3 (106 aa).

Residues His26, His29, Cys34, Cys37, His38, His39, Cys50, Cys55, His56, His75, Cys82, Cys85, His86, Cys98, Cys101, and His102 each coordinate heme c.

Post-translationally, binds 4 heme c groups per subunit.

Functionally, participates in sulfate respiration coupled with phosphorylation by transferring electrons from the enzyme dehydrogenase to ferredoxin. This is Cytochrome c3 from Maridesulfovibrio salexigens (Desulfovibrio salexigens).